Here is a 501-residue protein sequence, read N- to C-terminus: DNA nucleotidylexotransferase (501 aa).

A Nuclear localization signal motif is present at residues 11–17; that stretch reads KKRKRPV. In terms of domain architecture, BRCT spans 24–121; sequence QVEVKFKEVT…RPVRVETRHS (98 aa). The involved in DNA binding stretch occupies residues 249-253; the sequence is VGPKT. Residues 324–329 and 333–336 contribute to the a 2'-deoxyribonucleoside 5'-triphosphate site; these read GFRRGK and HDVD. Mg(2+)-binding residues include aspartate 334, aspartate 336, and aspartate 426. 441-442 is a binding site for a 2'-deoxyribonucleoside 5'-triphosphate; sequence GW.

The protein belongs to the DNA polymerase type-X family. The cofactor is Mg(2+).

The protein resides in the nucleus. The catalysed reaction is DNA(n) + a 2'-deoxyribonucleoside 5'-triphosphate = DNA(n+1) + diphosphate. Template-independent DNA polymerase which catalyzes the random addition of deoxynucleoside 5'-triphosphate to the 3'-end of a DNA initiator. One of the in vivo functions of this enzyme is the addition of nucleotides at the junction (N region) of rearranged Ig heavy chain and T-cell receptor gene segments during the maturation of B- and T-cells. In Oncorhynchus mykiss (Rainbow trout), this protein is DNA nucleotidylexotransferase (dntt).